The sequence spans 314 residues: Bifunctional pinoresinol-lariciresinol reductase 3 (314 aa).

NADP(+) is bound by residues 11 to 17 (GGTGFIG), Arg-36, and Lys-45. Residue Lys-138 is the Proton acceptor of the active site. Residue Arg-142 participates in NADP(+) binding. His-272 is a substrate binding site.

It belongs to the NmrA-type oxidoreductase family. Isoflavone reductase subfamily. Dimer.

The enzyme catalyses (-)-lariciresinol + NADP(+) = (-)-pinoresinol + NADPH + H(+). It catalyses the reaction (+)-secoisolariciresinol + NADP(+) = (-)-lariciresinol + NADPH + H(+). Functionally, reductase involved in lignan biosynthesis. Catalyzes the enantioselective sequential conversion of (-)-pinoresinol into (-)-lariciresinol and of (-)-lariciresinol into (+)-secoisolariciresinol. Abstracts the 4R-hydride from the NADPH cofactor during catalysis. This chain is Bifunctional pinoresinol-lariciresinol reductase 3, found in Thuja plicata (Western red-cedar).